The chain runs to 792 residues: Terminal nucleotidyltransferase 4A (792 aa).

The tract at residues 55–191 is disordered; it reads GAAGRGSGGL…QFHPGRRKRE (137 aa). Composition is skewed to low complexity over residues 80–97 and 105–139; these read APAALPPALLTALGPAAE and SPSLSSSSSSSSSNAESGTESPGCSSSSSSSASLG. Mg(2+) is bound by residues Asp297 and Asp299. Residues Gly360, Lys385, Ser403, and Tyr404 each coordinate ATP. Residues 428-486 form the PAP-associated domain; sequence NLGMLLVEFFELYGRNFNYLKTGIRIKEGGAYIAKEEIMKAMTSGYRPSMLCIEDPLLP. The ATP site is built by Asn488 and Arg492. Positions 601 to 619 are enriched in low complexity; it reads QLLSSGSSASSVSSLSGSD. Disordered stretches follow at residues 601-632 and 737-792; these read QLLSSGSSASSVSSLSGSDVDSDTPPCTTPSV and MKGS…SLSR. Residues 744-756 are compositionally biased toward gly residues; sequence TQGGGYSSVGSGG. Residues 764 to 781 are compositionally biased toward basic residues; sequence RGHHQYNRTGWRRKKHTH.

This sequence belongs to the DNA polymerase type-B-like family. In terms of assembly, component of a nuclear TRAMP-like complex, an ATP-dependent exosome regulatory complex consisting of a helicase (MTREX), an oligadenylate polymerase (TENT4B or TENT4A), and a substrate specific RNA-binding factor (ZCCHC7 or ZCCHC8). Several TRAMP-like complexes exist with specific compositions and are associated with nuclear, or nucleolar RNA exosomes. Mg(2+) is required as a cofactor. The cofactor is Mn(2+).

The protein resides in the cytoplasm. It localises to the nucleus. The protein localises to the nucleoplasm. The enzyme catalyses RNA(n) + ATP = RNA(n)-3'-adenine ribonucleotide + diphosphate. In terms of biological role, terminal nucleotidyltransferase that catalyzes preferentially the transfer of ATP and GTP on RNA 3' poly(A) tail creating a heterogeneous 3' poly(A) tail leading to mRNAs stabilization by protecting mRNAs from active deadenylation. Also functions as a catalytic subunit of a TRAMP-like complex which has a poly(A) RNA polymerase activity and is involved in a post-transcriptional quality control mechanism. Polyadenylation with short oligo(A) tails is required for the degradative activity of the exosome on several of its nuclear RNA substrates. Has no terminal uridylyltransferase activity, and does not play a role in replication-dependent histone mRNA degradation via uridylation. This is Terminal nucleotidyltransferase 4A from Homo sapiens (Human).